Here is a 431-residue protein sequence, read N- to C-terminus: MTKSAELYQKAQQTIPGGVNSPVRAFNGVGGSPIFVERADGAFIFDADGKAYIDYVGSWGPMILGHNHAVIREAVIEAAQRGLSFGAPTEMEIKMAELVSELVPSMEQLRMVSSGTEATMSAIRLARGFTGRDKILKFEGCYHGHADSLLVKAGSGALTLGQPSSPGVPADFAKHTLTATFNDLDSVRELFAANKGEIACIIVEPVAGNMNCIPPVEGFHEGLREICDQEGALLIFDEVMTGFRVALGGAQAHYNIKPDLTTLGKVIGGGMPVGAFGGRKEVMQYIAPTGPVYQAGTLSGNPVAMAAGYACLTLLREEGNEKRLASKTKHLADGFKSLAAQHGIPLVVNQVGGMFGFFFTEQEQITCYEDVTKCDIERFKRFFHLMIDHGVYLAPSAFEASFTSLAHGSKEIEATLEAADRCFAILAAESK.

Lys265 is subject to N6-(pyridoxal phosphate)lysine.

The protein belongs to the class-III pyridoxal-phosphate-dependent aminotransferase family. HemL subfamily. As to quaternary structure, homodimer. Pyridoxal 5'-phosphate serves as cofactor.

The protein resides in the cytoplasm. It catalyses the reaction (S)-4-amino-5-oxopentanoate = 5-aminolevulinate. Its pathway is porphyrin-containing compound metabolism; protoporphyrin-IX biosynthesis; 5-aminolevulinate from L-glutamyl-tRNA(Glu): step 2/2. This chain is Glutamate-1-semialdehyde 2,1-aminomutase, found in Vibrio vulnificus (strain CMCP6).